The sequence spans 138 residues: Salivary protein 15 Iper-3 (138 aa).

The N-terminal stretch at 1 to 21 (MESFVAMKVVCITVLFVIVAV) is a signal peptide. Residues N30, N42, N68, N107, and N127 are each glycosylated (N-linked (GlcNAc...) asparagine). The interval 119 to 138 (GPNGQKCANKSQCVGHIPGC) is CD4-binding.

It belongs to the salp15 family. As to quaternary structure, interacts with host CD4. Interacts with host DC-SIGN (CD209). Interacts with Borrelia outer surface protein C (OspC). In terms of tissue distribution, expressed in salivary glands.

It localises to the secreted. In terms of biological role, salivary tick protein that downregulates host immune system by binding to both dendritic cells, and CD4(+) T cells. Specifically binds to the CD4 coreceptor on T cells. This interaction prevents the activation of the Src kinase, Lck, and its downstream substrate Zap-70, and results in deficient activation of PLCgamma1, the repression of calcium fluxes triggered by T-cell antigen receptor (TCR) ligation, and a subsequent reduction in interleukin-2 production. This salivary protein also binds to DC-SIGN (CD209) on dendritic cells (DC) and activates the Raf-1 kinase/MEK signaling pathway that results in down-regulating expression of pro-inflammatory cytokines. Furthermore, it inhibits T cell proliferation induced by DCs. It also inhibits in vitro keratinocyte inflammation induced by Borrelia burgdorferi or by the major outer surface protein (OspC) of Borrelia. In addition, it downregulates chemokines and monocyte chemoattractant protein 1, as well as several antimicrobial peptides such as defensins, cathelicidin, psoriasin, and RNase 7. Apart from its immunomodulatory activities, it is also associated with protection of Borrelia spirochetes from antibody-mediated killing through its binding to OspC. In vivo, tests on different immune disease animal models show promising therapeutic results, e.g., in inhibiting HIV infection, experimental autoimmune encephalomyelitis, transplantation rejection, and asthma. This is Salivary protein 15 Iper-3 from Ixodes persulcatus (Taiga tick).